A 239-amino-acid chain; its full sequence is Phosphoribosylaminoimidazole-succinocarboxamide synthase (239 aa).

It belongs to the SAICAR synthetase family.

It carries out the reaction 5-amino-1-(5-phospho-D-ribosyl)imidazole-4-carboxylate + L-aspartate + ATP = (2S)-2-[5-amino-1-(5-phospho-beta-D-ribosyl)imidazole-4-carboxamido]succinate + ADP + phosphate + 2 H(+). It participates in purine metabolism; IMP biosynthesis via de novo pathway; 5-amino-1-(5-phospho-D-ribosyl)imidazole-4-carboxamide from 5-amino-1-(5-phospho-D-ribosyl)imidazole-4-carboxylate: step 1/2. The sequence is that of Phosphoribosylaminoimidazole-succinocarboxamide synthase from Acinetobacter baylyi (strain ATCC 33305 / BD413 / ADP1).